The sequence spans 910 residues: Eukaryotic translation initiation factor 3 subunit C (910 aa).

The disordered stretch occupies residues 1-21; it reads MSRFFANGSDSESESSEDEIQ. Over residues 11–20 the composition is skewed to acidic residues; the sequence is SESESSEDEI. A phosphoserine mark is found at Ser-34, Ser-165, Ser-176, and Ser-185. Residues 157–279 are disordered; sequence FREAPDQESE…IRKRAEDDED (123 aa). Residues 162–186 show a composition bias toward acidic residues; that stretch reads DQESEAEDEVVALESDGGDAGDDSD. The segment covering 188–207 has biased composition (low complexity); that stretch reads GVKPTEAAPKAVKTAPAKAA. The segment covering 209–235 has biased composition (acidic residues); sequence ADDDDSDDSIDWDSDSESETESSDDEN. Basic and acidic residues predominate over residues 240 to 268; sequence MRERFLKRTTEKEEKDDDKRKDKRKEQKI. The 177-residue stretch at 639–815 folds into the PCI domain; that stretch reads FHMHINLELL…ETVVMHRSEP (177 aa). The tract at residues 847–910 is disordered; sequence FFQRGNMGNR…QQQVQTIDEE (64 aa). A compositionally biased stretch (low complexity) spans 862–874; that stretch reads NRNQNNQGGNWLG. Over residues 882–891 the composition is skewed to basic residues; that stretch reads RNRNQRGHHK. Positions 895 to 910 are enriched in low complexity; the sequence is DRQQQQQQQVQTIDEE.

Belongs to the eIF-3 subunit C family. As to quaternary structure, component of the eukaryotic translation initiation factor 3 (eIF-3) complex. The eIF-3 complex interacts with pix.

The protein resides in the cytoplasm. In terms of biological role, component of the eukaryotic translation initiation factor 3 (eIF-3) complex, which is involved in protein synthesis of a specialized repertoire of mRNAs and, together with other initiation factors, stimulates binding of mRNA and methionyl-tRNAi to the 40S ribosome. The eIF-3 complex specifically targets and initiates translation of a subset of mRNAs involved in cell proliferation. The polypeptide is Eukaryotic translation initiation factor 3 subunit C (Drosophila erecta (Fruit fly)).